A 396-amino-acid chain; its full sequence is Elongation factor Tu (396 aa).

One can recognise a tr-type G domain in the interval 10-205 (KPHVNIGTIG…ACDESIPDPE (196 aa)). Residues 19–26 (GHVDHGKT) are G1. Residue 19-26 (GHVDHGKT) participates in GTP binding. Residue T26 coordinates Mg(2+). The interval 62–66 (GITIN) is G2. Residues 83-86 (DAPG) form a G3 region. Residues 83–87 (DAPGH) and 138–141 (NKCD) contribute to the GTP site. The G4 stretch occupies residues 138-141 (NKCD). The segment at 175–177 (SAL) is G5.

The protein belongs to the TRAFAC class translation factor GTPase superfamily. Classic translation factor GTPase family. EF-Tu/EF-1A subfamily. Monomer.

It is found in the cytoplasm. The catalysed reaction is GTP + H2O = GDP + phosphate + H(+). In terms of biological role, GTP hydrolase that promotes the GTP-dependent binding of aminoacyl-tRNA to the A-site of ribosomes during protein biosynthesis. The polypeptide is Elongation factor Tu (Corynebacterium jeikeium (strain K411)).